Reading from the N-terminus, the 281-residue chain is Probable endonuclease 4 (281 aa).

Zn(2+) is bound by residues H69, H109, E145, D179, H182, H216, D229, H231, and E261.

This sequence belongs to the AP endonuclease 2 family. Requires Zn(2+) as cofactor.

It catalyses the reaction Endonucleolytic cleavage to 5'-phosphooligonucleotide end-products.. Its function is as follows. Endonuclease IV plays a role in DNA repair. It cleaves phosphodiester bonds at apurinic or apyrimidinic (AP) sites, generating a 3'-hydroxyl group and a 5'-terminal sugar phosphate. In Glaesserella parasuis serovar 5 (strain SH0165) (Haemophilus parasuis), this protein is Probable endonuclease 4.